The chain runs to 243 residues: Protein-L-isoaspartate O-methyltransferase (243 aa).

Residue Ser-87 is part of the active site.

This sequence belongs to the methyltransferase superfamily. L-isoaspartyl/D-aspartyl protein methyltransferase family.

It is found in the cytoplasm. It catalyses the reaction [protein]-L-isoaspartate + S-adenosyl-L-methionine = [protein]-L-isoaspartate alpha-methyl ester + S-adenosyl-L-homocysteine. Functionally, catalyzes the methyl esterification of L-isoaspartyl residues in peptides and proteins that result from spontaneous decomposition of normal L-aspartyl and L-asparaginyl residues. It plays a role in the repair and/or degradation of damaged proteins. The chain is Protein-L-isoaspartate O-methyltransferase from Methanosarcina mazei (strain ATCC BAA-159 / DSM 3647 / Goe1 / Go1 / JCM 11833 / OCM 88) (Methanosarcina frisia).